The primary structure comprises 145 residues: Hemoglobin subunit beta-A (145 aa).

Positions M1–H145 constitute a Globin domain. Heme b is bound by residues H62 and H91.

This sequence belongs to the globin family. Heterotetramer of two alpha chains and two beta chains. As to expression, red blood cells.

Its function is as follows. Involved in oxygen transport from the lung to the various peripheral tissues. This Capra hircus (Goat) protein is Hemoglobin subunit beta-A.